The chain runs to 360 residues: Capsular polysaccharide phosphotransferase LcbA (360 aa).

Belongs to the stealth family.

Its function is as follows. Part of a group II capsule biosynthesis locus. The sequence is that of Capsular polysaccharide phosphotransferase LcbA (lcbA) from Aeromonas hydrophila.